Consider the following 444-residue polypeptide: uncharacterized protein (444 aa).

The next 14 helical transmembrane spans lie at 9-29, 42-62, 82-102, 104-126, 136-156, 164-184, 193-213, 217-237, 263-283, 295-315, 324-344, 347-367, 387-407, and 411-431; these read LIVS…MIAV, IASI…TQPI, LFLI…LIVF, ALQA…HVVS, FFGL…SILI, IFWV…TMFP, APLD…IILL, EAPW…PLFF, LSVL…PLFM, GMAL…GAQL, IIFL…LLSS, SVLF…VGLT, GIFS…IGLI, and HTLF…SLGI.

Belongs to the major facilitator superfamily. TCR/Tet family.

It is found in the cell membrane. This is an uncharacterized protein from Bacillus subtilis (strain 168).